Reading from the N-terminus, the 185-residue chain is Threonylcarbamoyl-AMP synthase (185 aa).

One can recognise a YrdC-like domain in the interval 4–185 (SFRAQCAARV…LVTGQVIRPA (182 aa)).

The protein belongs to the SUA5 family. TsaC subfamily.

Its subcellular location is the cytoplasm. The enzyme catalyses L-threonine + hydrogencarbonate + ATP = L-threonylcarbamoyladenylate + diphosphate + H2O. Its function is as follows. Required for the formation of a threonylcarbamoyl group on adenosine at position 37 (t(6)A37) in tRNAs that read codons beginning with adenine. Catalyzes the conversion of L-threonine, HCO(3)(-)/CO(2) and ATP to give threonylcarbamoyl-AMP (TC-AMP) as the acyladenylate intermediate, with the release of diphosphate. The chain is Threonylcarbamoyl-AMP synthase from Pseudomonas paraeruginosa (strain DSM 24068 / PA7) (Pseudomonas aeruginosa (strain PA7)).